Consider the following 178-residue polypeptide: uncharacterized protein (178 aa).

2 helical membrane-spanning segments follow: residues 6-26 and 154-174; these read AIFG…VSGL and KELV…AMLI.

The protein localises to the cell membrane. This is an uncharacterized protein from Methanocaldococcus jannaschii (strain ATCC 43067 / DSM 2661 / JAL-1 / JCM 10045 / NBRC 100440) (Methanococcus jannaschii).